Here is a 186-residue protein sequence, read N- to C-terminus: MKGGSIELGEVSKNASTNKGVKRGLSIMDFILRIIAGVATLASAVAMGTTDERLPFATSFVQFRAEYDDLPSFVFFVLANSIVCGYLALSLILSILHIVRSTAVKSRILLIVLDMVMMGLLAAAASAAASIVYIAHYGNTQANWFPICQQYNSFCERISGSLIGSYIAVALFIIIILLSQSAISRN.

Residues 1–26 (MKGGSIELGEVSKNASTNKGVKRGLS) lie on the Cytoplasmic side of the membrane. The chain crosses the membrane as a helical span at residues 27–47 (IMDFILRIIAGVATLASAVAM). Topologically, residues 48 to 72 (GTTDERLPFATSFVQFRAEYDDLPS) are extracellular. The helical transmembrane segment at 73–93 (FVFFVLANSIVCGYLALSLIL) threads the bilayer. Over 94–107 (SILHIVRSTAVKSR) the chain is Cytoplasmic. The chain crosses the membrane as a helical span at residues 108-128 (ILLIVLDMVMMGLLAAAASAA). Residues 129–157 (ASIVYIAHYGNTQANWFPICQQYNSFCER) lie on the Extracellular side of the membrane. Residues 158–178 (ISGSLIGSYIAVALFIIIILL) traverse the membrane as a helical segment. Over 179–186 (SQSAISRN) the chain is Cytoplasmic.

The protein belongs to the Casparian strip membrane proteins (CASP) family. In terms of assembly, homodimer and heterodimers.

The protein resides in the cell membrane. Functionally, regulates membrane-cell wall junctions and localized cell wall deposition. Required for establishment of the Casparian strip membrane domain (CSD) and the subsequent formation of Casparian strips, a cell wall modification of the root endodermis that determines an apoplastic barrier between the intraorganismal apoplasm and the extraorganismal apoplasm and prevents lateral diffusion. This chain is Casparian strip membrane protein 1, found in Medicago truncatula (Barrel medic).